The primary structure comprises 565 residues: uncharacterized protein (565 aa).

This is an uncharacterized protein from Acanthamoeba polyphaga (Amoeba).